The sequence spans 436 residues: Phosphoribosylamine--glycine ligase (436 aa).

An ATP-grasp domain is found at 106 to 318 (RKLFEDYRIP…MLEICEGIVD (213 aa)). 133–196 (MEDFDSEAVV…EERVVGEEFT (64 aa)) provides a ligand contact to ATP. 3 residues coordinate Mg(2+): Gln276, Glu288, and Asn290. Gln276, Glu288, and Asn290 together coordinate Mn(2+).

Belongs to the GARS family. The cofactor is Mg(2+). Requires Mn(2+) as cofactor.

It catalyses the reaction 5-phospho-beta-D-ribosylamine + glycine + ATP = N(1)-(5-phospho-beta-D-ribosyl)glycinamide + ADP + phosphate + H(+). It functions in the pathway purine metabolism; IMP biosynthesis via de novo pathway; N(1)-(5-phospho-D-ribosyl)glycinamide from 5-phospho-alpha-D-ribose 1-diphosphate: step 2/2. The protein is Phosphoribosylamine--glycine ligase of Methanothermobacter thermautotrophicus (strain ATCC 29096 / DSM 1053 / JCM 10044 / NBRC 100330 / Delta H) (Methanobacterium thermoautotrophicum).